The primary structure comprises 172 residues: Cytochrome c oxidase subunit 4 isoform 2, mitochondrial (172 aa).

The transit peptide at 1-18 directs the protein to the mitochondrion; that stretch reads MFSRATRSLVMKTGGLRT. Positions 1–33 are disordered; it reads MFSRATRSLVMKTGGLRTQGTHSPGSAASSSQR. The segment covering 16 to 33 has biased composition (polar residues); the sequence is LRTQGTHSPGSAASSSQR. Residues 19 to 101 lie on the Mitochondrial matrix side of the membrane; the sequence is QGTHSPGSAA…TFAEMNHRSN (83 aa). Residues 102–127 form a helical membrane-spanning segment; the sequence is EWKTVMGCVFFFIGFTALVIWWQRVY. Topologically, residues 128 to 172 are mitochondrial intermembrane; that stretch reads VFPKKVVTLTEERKAQQLQRLLDMKSNPIQGLSAHWDYEKKEWKK.

It belongs to the cytochrome c oxidase IV family. As to quaternary structure, component of the cytochrome c oxidase (complex IV, CIV), a multisubunit enzyme composed of 14 subunits. The complex is composed of a catalytic core of 3 subunits MT-CO1, MT-CO2 and MT-CO3, encoded in the mitochondrial DNA, and 11 supernumerary subunits COX4I, COX5A, COX5B, COX6A, COX6B, COX6C, COX7A, COX7B, COX7C, COX8 and NDUFA4, which are encoded in the nuclear genome. The complex exists as a monomer or a dimer and forms supercomplexes (SCs) in the inner mitochondrial membrane with NADH-ubiquinone oxidoreductase (complex I, CI) and ubiquinol-cytochrome c oxidoreductase (cytochrome b-c1 complex, complex III, CIII), resulting in different assemblies (supercomplex SCI(1)III(2)IV(1) and megacomplex MCI(2)III(2)IV(2)). As to expression, highly expressed in lung.

The protein localises to the mitochondrion inner membrane. Its pathway is energy metabolism; oxidative phosphorylation. Its function is as follows. Component of the cytochrome c oxidase, the last enzyme in the mitochondrial electron transport chain which drives oxidative phosphorylation. The respiratory chain contains 3 multisubunit complexes succinate dehydrogenase (complex II, CII), ubiquinol-cytochrome c oxidoreductase (cytochrome b-c1 complex, complex III, CIII) and cytochrome c oxidase (complex IV, CIV), that cooperate to transfer electrons derived from NADH and succinate to molecular oxygen, creating an electrochemical gradient over the inner membrane that drives transmembrane transport and the ATP synthase. Cytochrome c oxidase is the component of the respiratory chain that catalyzes the reduction of oxygen to water. Electrons originating from reduced cytochrome c in the intermembrane space (IMS) are transferred via the dinuclear copper A center (CU(A)) of subunit 2 and heme A of subunit 1 to the active site in subunit 1, a binuclear center (BNC) formed by heme A3 and copper B (CU(B)). The BNC reduces molecular oxygen to 2 water molecules using 4 electrons from cytochrome c in the IMS and 4 protons from the mitochondrial matrix. The sequence is that of Cytochrome c oxidase subunit 4 isoform 2, mitochondrial (Cox4i2) from Rattus norvegicus (Rat).